The chain runs to 380 residues: Cytochrome b (380 aa).

Transmembrane regions (helical) follow at residues 34–54 (FGSL…LLAM), 78–99 (WLIR…FLHI), 114–134 (WNTG…GYVL), and 179–199 (FFAL…IHLT). Heme b contacts are provided by His-84 and His-98. Residues His-183 and His-197 each coordinate heme b. His-202 serves as a coordination point for a ubiquinone. A run of 4 helical transmembrane segments spans residues 227–247 (IKDI…ALFS), 289–309 (LGGV…PFLH), 321–341 (LSQT…WIGS), and 348–368 (FIII…ILFP).

It belongs to the cytochrome b family. In terms of assembly, the cytochrome bc1 complex contains 11 subunits: 3 respiratory subunits (MT-CYB, CYC1 and UQCRFS1), 2 core proteins (UQCRC1 and UQCRC2) and 6 low-molecular weight proteins (UQCRH/QCR6, UQCRB/QCR7, UQCRQ/QCR8, UQCR10/QCR9, UQCR11/QCR10 and a cleavage product of UQCRFS1). This cytochrome bc1 complex then forms a dimer. The cofactor is heme b.

It localises to the mitochondrion inner membrane. Its function is as follows. Component of the ubiquinol-cytochrome c reductase complex (complex III or cytochrome b-c1 complex) that is part of the mitochondrial respiratory chain. The b-c1 complex mediates electron transfer from ubiquinol to cytochrome c. Contributes to the generation of a proton gradient across the mitochondrial membrane that is then used for ATP synthesis. The chain is Cytochrome b (MT-CYB) from Alectoris rufa (Red-legged partridge).